The following is a 122-amino-acid chain: S-adenosylmethionine decarboxylase proenzyme (122 aa).

The active-site Schiff-base intermediate with substrate; via pyruvic acid is the serine 61. Serine 61 is subject to Pyruvic acid (Ser); by autocatalysis. Histidine 66 (proton acceptor; for processing activity) is an active-site residue. The active-site Proton donor; for catalytic activity is cysteine 81.

It belongs to the prokaryotic AdoMetDC family. Type 1 subfamily. As to quaternary structure, heterotetramer of two alpha and two beta chains arranged as a dimer of alpha/beta heterodimers. Pyruvate is required as a cofactor. Post-translationally, is synthesized initially as an inactive proenzyme. Formation of the active enzyme involves a self-maturation process in which the active site pyruvoyl group is generated from an internal serine residue via an autocatalytic post-translational modification. Two non-identical subunits are generated from the proenzyme in this reaction, and the pyruvate is formed at the N-terminus of the alpha chain, which is derived from the carboxyl end of the proenzyme. The post-translation cleavage follows an unusual pathway, termed non-hydrolytic serinolysis, in which the side chain hydroxyl group of the serine supplies its oxygen atom to form the C-terminus of the beta chain, while the remainder of the serine residue undergoes an oxidative deamination to produce ammonia and the pyruvoyl group blocking the N-terminus of the alpha chain.

It carries out the reaction S-adenosyl-L-methionine + H(+) = S-adenosyl 3-(methylsulfanyl)propylamine + CO2. It functions in the pathway amine and polyamine biosynthesis; S-adenosylmethioninamine biosynthesis; S-adenosylmethioninamine from S-adenosyl-L-methionine: step 1/1. Functionally, catalyzes the decarboxylation of S-adenosylmethionine to S-adenosylmethioninamine (dcAdoMet), the propylamine donor required for the synthesis of the polyamines spermine and spermidine from the diamine putrescine. This Prochlorococcus marinus (strain MIT 9211) protein is S-adenosylmethionine decarboxylase proenzyme.